The sequence spans 434 residues: Gamma-glutamyl phosphate reductase (434 aa).

This sequence belongs to the gamma-glutamyl phosphate reductase family.

Its subcellular location is the cytoplasm. The enzyme catalyses L-glutamate 5-semialdehyde + phosphate + NADP(+) = L-glutamyl 5-phosphate + NADPH + H(+). Its pathway is amino-acid biosynthesis; L-proline biosynthesis; L-glutamate 5-semialdehyde from L-glutamate: step 2/2. In terms of biological role, catalyzes the NADPH-dependent reduction of L-glutamate 5-phosphate into L-glutamate 5-semialdehyde and phosphate. The product spontaneously undergoes cyclization to form 1-pyrroline-5-carboxylate. This Rhodopirellula baltica (strain DSM 10527 / NCIMB 13988 / SH1) protein is Gamma-glutamyl phosphate reductase.